The following is a 177-amino-acid chain: Endoribonuclease YbeY (177 aa).

Positions 118, 122, and 128 each coordinate Zn(2+).

It belongs to the endoribonuclease YbeY family. It depends on Zn(2+) as a cofactor.

Its subcellular location is the cytoplasm. Its function is as follows. Single strand-specific metallo-endoribonuclease involved in late-stage 70S ribosome quality control and in maturation of the 3' terminus of the 16S rRNA. The sequence is that of Endoribonuclease YbeY from Mycobacterium sp. (strain JLS).